The following is a 518-amino-acid chain: T-box transcription factor TBX5 (518 aa).

The segment at 1-46 is disordered; sequence MADADEGFGLAHTPLEPDAKDLPCDSKPESALGAPSKSPSSPQAAF. Basic and acidic residues predominate over residues 15-28; sequence LEPDAKDLPCDSKP. A compositionally biased stretch (low complexity) spans 34-45; sequence APSKSPSSPQAA. The T-box DNA-binding region spans 58 to 238; the sequence is LHERELWLKF…NNPFAKGFRG (181 aa). The interval 250–356 is disordered; sequence MQSKEYPVVP…PSEEDSFYRS (107 aa). Residues 262 to 301 show a composition bias toward polar residues; that stretch reads TVRQKVASNHSPFSSESRALSTSSNLGSQYQCENGVSGPS. The residue at position 339 (Lys339) is an N6-acetyllysine.

As to quaternary structure, monomer. Homodimer (via the T-box); binds DNA as homodimer. Interacts (via the T-box) with NKX2-5 (via the homeobox); this complex binds DNA. Interacts with GATA4. Interacts with KAT2A and KAT2B. Acetylation at Lys-339 by KAT2A and KAT2B promotes nuclear retention.

The protein resides in the nucleus. It localises to the cytoplasm. DNA-binding protein that regulates the transcription of several genes and is involved in heart development and limb pattern formation. Binds to the core DNA motif of NPPA promoter. The chain is T-box transcription factor TBX5 (TBX5) from Homo sapiens (Human).